We begin with the raw amino-acid sequence, 241 residues long: Probable transcriptional regulatory protein azo0574 (241 aa).

The interval 1–21 (MAGHSKWANIQHRKGRQDAKR) is disordered.

This sequence belongs to the TACO1 family.

The protein resides in the cytoplasm. The protein is Probable transcriptional regulatory protein azo0574 of Azoarcus sp. (strain BH72).